The sequence spans 256 residues: Venom allergen-1 (256 aa).

The N-terminal stretch at 1-21 is a signal peptide; the sequence is MAFNGIALLITATIFIGSCYA. The SCP domain occupies 65–211; sequence LNTHNKLRAE…MINYYLVCNY (147 aa). 2 N-linked (GlcNAc...) asparagine glycosylation sites follow: asparagine 146 and asparagine 210.

The protein belongs to the CRISP family.

The protein resides in the secreted. Its function is as follows. Activates autophagy in human monocytic cells, dendritic cells and macrophages. Functionally, (Microbial infection) Promotes Zika virus replication in human dendritic cells and macrophages. Facilitates Zika virus transmission from infected mosquitoes to the host in mouse model. In Aedes albopictus (Asian tiger mosquito), this protein is Venom allergen-1.